The following is a 502-amino-acid chain: Protein adenylyltransferase Fic (502 aa).

Residues 1 to 24 (MAMATGKATEEEQPEQGQQQQQLQ) form a disordered region. Residues 15–24 (EQGQQQQQLQ) are compositionally biased toward low complexity. Residues 38 to 60 (FALFFIAGCLAAFGFHALTSSSG) form a helical membrane-spanning segment. TPR repeat units follow at residues 122 to 155 (AMGA…APKH) and 156 to 190 (PEVL…NPSN). The short motif at 247–252 (SVGIEG) is the Inhibitory (S/T)XXXE(G/N) motif element. Residues E251 and 332-335 (VGGH) contribute to the ATP site. The 136-residue stretch at 301–436 (ITLKDILELH…IRPFVRFIAD (136 aa)) folds into the Fido domain. Residue H379 is part of the active site. Residues 383–390 (DGNGRTSR), 415–416 (YY), and N423 each bind ATP. A disordered region spans residues 478 to 502 (SPELYESGSGSGAGAGAGSGQKGMP). Over residues 486-502 (SGSGAGAGAGSGQKGMP) the composition is skewed to gly residues.

Belongs to the fic family. Homodimer.

It localises to the membrane. The enzyme catalyses L-tyrosyl-[protein] + ATP = O-(5'-adenylyl)-L-tyrosyl-[protein] + diphosphate. It catalyses the reaction L-threonyl-[protein] + ATP = 3-O-(5'-adenylyl)-L-threonyl-[protein] + diphosphate. It carries out the reaction 3-O-(5'-adenylyl)-L-threonyl-[protein] + H2O = L-threonyl-[protein] + AMP + H(+). Its activity is regulated as follows. The side chain of Glu-251 determines which of the two opposing activities (AMPylase or de-AMPylase) will take place. In response to endoplasmic reticulum stress, mediates de-AMPylase activity. Adenylyltransferase activity is inhibited by the inhibitory helix present at the N-terminus: Glu-251 binds ATP and competes with ATP-binding at Arg-390, thereby preventing adenylyltransferase activity. In unstressed cells, disengagement of Glu-251 promotes adenylyltransferase activity. Activation dissociates ATP-binding from Glu-251, allowing ordered binding of the entire ATP moiety with the alpha-phosphate in an orientation that is productive for accepting an incoming target hydroxyl side chain. Functionally, protein that can both mediate the addition of adenosine 5'-monophosphate (AMP) to specific residues of target proteins (AMPylation), and the removal of the same modification from target proteins (de-AMPylation), depending on the context. The side chain of Glu-251 determines which of the two opposing activities (AMPylase or de-AMPylase) will take place. Acts as a key regulator of the unfolded protein response (UPR) by mediating AMPylation or de-AMPylation of Hsc70-3/BiP. In unstressed cells, acts as an adenylyltransferase by mediating AMPylation of Hsc70-3/BiP at 'Thr-518', thereby inactivating it. In response to endoplasmic reticulum stress, acts as a phosphodiesterase by mediating removal of ATP (de-AMPylation) from Hsc70-3/BiP at 'Thr-518', leading to restore HSPA5/BiP activity. The sequence is that of Protein adenylyltransferase Fic from Drosophila mojavensis (Fruit fly).